A 735-amino-acid chain; its full sequence is MFGQQLASDVQQYLERLEKQRQLKVGADEASAGLTMGGDALRVPFLDFATATPKRHQTVVPGVGTLHDCCEHSPLFSAVARRLLFNSLVPAQLKGRDFGGDHTAKLEFLAPELVRAVARLRFKECAPADVVPQRNAYYSVLNTFQALHRSEAFRQLVHFVRDFAQLLKTSFRASSLTETTGPPKKRAKVDVATHGRTYGTLELFQKMILMHATYFLAAVLLGDHAEQVNTFLRLVFEIPLFSDAAVRHFRQRATVFLVPRRHGKTWFLVPLIALSLASFRGIKIGYTAHIRKATEPVFEEIDACLRGWFGSARVDHVKGETISFSFPDGSRSTIVFASSHNTNGIRGQDFNLLFVDEANFIRPDAVQTIMGFLNQANCKIIFVSSTNTGKASTSFLYNLRGAADELLNVVTYICDDHMPRVVTHTNATACSCYILNKPVFITMDGAVRRTADLFLADSFMQEIIGGQARETGDDRPVLTKSAGERFLLYRPSTTTNSGLMAPDLYVYVDPAFTANTRASGTGVAVVGRYRDDYIIFALEHFFLRALTGSAPADIARCVVHSLTQVLALHPGAFRGVRVAVEGNSSQDSAVAIATHVHTEMHRLLASEGADAGSGPELLFYHCEPPGSAVLYPFFLLNKQKTPAFEHFIKKFNSGGVMASQEIVSATVRLQTDPVEYLLEQLNNLTETVSPNTDVRTYSGKRNGASDDLMVAVIMAIYLAAQAGPPHTFAPITRVS.

A Nuclear localization signal motif is present at residues 183–189 (PKKRAKV). The short motif at 258–265 (VPRRHGKT) is the Walker A motif element. The Walker B motif motif lies at 352-357 (LLFVDE). E357 (for ATPase activity) is an active-site residue. Residues D509, E581, and D707 each act as for nuclease activity in the active site.

It belongs to the herpesviridae TRM3 protein family. Interacts with the terminase subunits TRM1 and TRM2. Interacts with portal protein.

The protein resides in the host nucleus. Functionally, component of the molecular motor that translocates viral genomic DNA in empty capsid during DNA packaging. Forms a tripartite terminase complex together with TRM1 and TRM2 in the host cytoplasm. Once the complex reaches the host nucleus, it interacts with the capsid portal vertex. This portal forms a ring in which genomic DNA is translocated into the capsid. TRM3 carries an RNase H-like nuclease activity that plays an important role for the cleavage of concatemeric viral DNA into unit length genomes. This Homo sapiens (Human) protein is Tripartite terminase subunit 3.